A 113-amino-acid polypeptide reads, in one-letter code: Large ribosomal subunit protein bL17 (113 aa).

It belongs to the bacterial ribosomal protein bL17 family. Part of the 50S ribosomal subunit. Contacts protein L32.

The polypeptide is Large ribosomal subunit protein bL17 (Clostridium tetani (strain Massachusetts / E88)).